A 99-amino-acid chain; its full sequence is Nucleoid-associated protein LACR_0106 (99 aa).

Belongs to the YbaB/EbfC family. As to quaternary structure, homodimer.

Its subcellular location is the cytoplasm. It is found in the nucleoid. Its function is as follows. Binds to DNA and alters its conformation. May be involved in regulation of gene expression, nucleoid organization and DNA protection. In Lactococcus lactis subsp. cremoris (strain SK11), this protein is Nucleoid-associated protein LACR_0106.